The primary structure comprises 322 residues: tRNA N6-adenosine threonylcarbamoyltransferase (322 aa).

Fe cation contacts are provided by His109 and His113. Residues 131 to 135 (LISGG), Asp164, Gly177, Asp181, and Asn277 each bind substrate. Asp303 provides a ligand contact to Fe cation.

This sequence belongs to the KAE1 / TsaD family. It depends on Fe(2+) as a cofactor.

It is found in the cytoplasm. The enzyme catalyses L-threonylcarbamoyladenylate + adenosine(37) in tRNA = N(6)-L-threonylcarbamoyladenosine(37) in tRNA + AMP + H(+). In terms of biological role, required for the formation of a threonylcarbamoyl group on adenosine at position 37 (t(6)A37) in tRNAs that read codons beginning with adenine. Is involved in the transfer of the threonylcarbamoyl moiety of threonylcarbamoyl-AMP (TC-AMP) to the N6 group of A37, together with TsaE and TsaB. TsaD likely plays a direct catalytic role in this reaction. In Mesomycoplasma hyopneumoniae (strain 232) (Mycoplasma hyopneumoniae), this protein is tRNA N6-adenosine threonylcarbamoyltransferase.